The sequence spans 334 residues: O(6)-methylguanine-induced apoptosis 2 (334 aa).

The disordered stretch occupies residues 1–60 (MDNSAQKNERTGKHPRRASEVQKGFTAAYPTQSSIPFKSQASVIPESEKKGFNSQAKRFP). Positions 7–20 (KNERTGKHPRRASE) are enriched in basic and acidic residues. Polar residues predominate over residues 29–42 (YPTQSSIPFKSQAS). 7 STPGR repeats span residues 67–74 (PGPGFYNV), 109–117 (PAANAYTIP), 148–155 (PAPNYYNA), 187–206 (GPPP…SPNT), 225–257 (GPGP…SAQP), 267–282 (PGPG…GPRK), and 306–316 (LPGPATYKPEL). Tyr-72 is subject to Phosphotyrosine.

Belongs to the STPG1 family.

The protein resides in the cytoplasm. It is found in the nucleus. May positively contribute to the induction of apoptosis triggered by O(6)-methylguanine. The chain is O(6)-methylguanine-induced apoptosis 2 (STPG1) from Homo sapiens (Human).